Reading from the N-terminus, the 137-residue chain is Putative nickel-responsive regulator (137 aa).

Ni(2+) contacts are provided by His78, His89, His91, and Cys97.

It belongs to the transcriptional regulatory CopG/NikR family. The cofactor is Ni(2+).

In terms of biological role, transcriptional regulator. The chain is Putative nickel-responsive regulator from Syntrophus aciditrophicus (strain SB).